Here is a 184-residue protein sequence, read N- to C-terminus: Ribosome maturation factor RimM (184 aa).

The 74-residue stretch at 111-184 (DDEFYWVDLI…HIVVDWGLDY (74 aa)) folds into the PRC barrel domain.

This sequence belongs to the RimM family. As to quaternary structure, binds ribosomal protein uS19.

The protein localises to the cytoplasm. An accessory protein needed during the final step in the assembly of 30S ribosomal subunit, possibly for assembly of the head region. Essential for efficient processing of 16S rRNA. May be needed both before and after RbfA during the maturation of 16S rRNA. It has affinity for free ribosomal 30S subunits but not for 70S ribosomes. This Ralstonia nicotianae (strain ATCC BAA-1114 / GMI1000) (Ralstonia solanacearum) protein is Ribosome maturation factor RimM.